Reading from the N-terminus, the 228-residue chain is Phosphoglycolate phosphatase 1 (228 aa).

D8 acts as the Nucleophile in catalysis. Mg(2+) contacts are provided by D8 and D10. Substrate is bound at residue K149. Positions 172 and 176 each coordinate Mg(2+).

The protein belongs to the archaeal SPP-like hydrolase family. Requires Mg(2+) as cofactor.

The enzyme catalyses 2-phosphoglycolate + H2O = glycolate + phosphate. Catalyzes the dephosphorylation of 2-phosphoglycolate. The polypeptide is Phosphoglycolate phosphatase 1 (Saccharolobus solfataricus (strain ATCC 35092 / DSM 1617 / JCM 11322 / P2) (Sulfolobus solfataricus)).